A 519-amino-acid polypeptide reads, in one-letter code: Dolichol kinase (519 aa).

Topologically, residues 1–47 are cytoplasmic; sequence MVAIIPHASFTTIKLTQKTEGSQMPTEEICKINMRTRKFDVGGNSRD. A helical membrane pass occupies residues 48–68; the sequence is FECFYSNFVQTVILLGTFFYC. At 69 to 88 the chain is on the lumenal side; the sequence is VERLQPWSIVTADISYKQIF. Residues 89–109 traverse the membrane as a helical segment; the sequence is VNVFVVCLIMVGLIFTKYWQH. Topologically, residues 110–118 are cytoplasmic; sequence GYKSLPKFD. Residues 119–139 form a helical membrane-spanning segment; that stretch reads TIYSLYLPFMVSLLFDTSSTV. Residues 140-151 are Lumenal-facing; it reads INTILILSVLNS. Residues 152–172 traverse the membrane as a helical segment; that stretch reads YRWRTQLVVIILQLCLIFFNF. Residues 173 to 181 are Cytoplasmic-facing; that stretch reads EAGDRLKNI. The helical transmembrane segment at 182–203 threads the bilayer; it reads ISIVINSLLSLILKYIGQLKSL. Topologically, residues 204–223 are lumenal; that stretch reads DNIDSNLFSILLTNILYVSE. A helical membrane pass occupies residues 224–244; sequence AGTVHFRILKGIILALTTIIS. Over 245–253 the chain is Cytoplasmic; it reads INYVLKKVM. The helical transmembrane segment at 254-274 threads the bilayer; sequence HFKPFMLSISFAIGLPLFANT. Over 275-294 the chain is Lumenal; sequence FIHLEDGENPLLWLVKYILE. The chain crosses the membrane as a helical span at residues 295–315; the sequence is STIRQKILFAWSSILILSIPS. Topologically, residues 316–326 are cytoplasmic; sequence ILIEKDSLSLN. Residues 327 to 347 form a helical membrane-spanning segment; the sequence is TSRKLWHFIIFLLIIPSFQMD. Residues 348-349 are Lumenal-facing; that stretch reads SN. The helical transmembrane segment at 350–370 threads the bilayer; it reads FVKIALSGTIPVFLSIEYIRF. Residues 371–394 are Cytoplasmic-facing; the sequence is QNLPPLGSAIELQLRRFADDRDHS. Residues 395-415 traverse the membrane as a helical segment; sequence GPLIISYLYLLFGISTPLLMN. The Lumenal segment spans residues 416–417; the sequence is NS. A helical transmembrane segment spans residues 418-438; that stretch reads PMGLIGLGIGDSLASIIGKRY. The Cytoplasmic portion of the chain corresponds to 439 to 449; the sequence is GRIRWKGTQKT. The chain crosses the membrane as a helical span at residues 450–470; sequence LEGTLAFIVTSFIVCLVLLRF. The Lumenal portion of the chain corresponds to 471 to 472; sequence DK. A helical membrane pass occupies residues 473–493; the sequence is AAIFNHLTTLQLLTLCTLSGV. Residues 494-519 are Cytoplasmic-facing; it reads LEGNSVLNDNILIPAFMMICEKLITL.

The protein belongs to the polyprenol kinase family.

The protein resides in the endoplasmic reticulum membrane. The catalysed reaction is a di-trans,poly-cis-dolichol + CTP = a di-trans,poly-cis-dolichyl phosphate + CDP + H(+). The protein operates within protein modification; protein glycosylation. In terms of biological role, catalyzes CTP-mediated phosphorylation of dolichol, the terminal step in de novo dolichyl monophosphate (Dol-P) biosynthesis. Dol-P is a lipid carrier essential for the synthesis of N-linked and O-linked oligosaccharides and for GPI anchors. This is Dolichol kinase (SEC59) from Saccharomyces cerevisiae (strain ATCC 204508 / S288c) (Baker's yeast).